The primary structure comprises 200 residues: NAD(P)H dehydrogenase (quinone) (200 aa).

Positions 4–191 (VLVLYYSSYG…DIARYQGKRV (188 aa)) constitute a Flavodoxin-like domain. Residues 10-15 (SSYGHV) and 79-81 (TRF) each bind FMN. Tyr-12 is an NAD(+) binding site. Residue Trp-99 participates in substrate binding. Residues 114-120 (STGTQHG) and His-135 contribute to the FMN site.

It belongs to the WrbA family. FMN is required as a cofactor.

The enzyme catalyses a quinone + NADH + H(+) = a quinol + NAD(+). It catalyses the reaction a quinone + NADPH + H(+) = a quinol + NADP(+). The polypeptide is NAD(P)H dehydrogenase (quinone) (Burkholderia lata (strain ATCC 17760 / DSM 23089 / LMG 22485 / NCIMB 9086 / R18194 / 383)).